Reading from the N-terminus, the 261-residue chain is NAD-capped RNA hydrolase NudC (261 aa).

Positions 25 and 69 each coordinate substrate. Residues C98 and C101 each coordinate Zn(2+). Position 111 (E111) interacts with substrate. 2 residues coordinate Zn(2+): C116 and C119. Y124 serves as a coordination point for substrate. Positions 125 to 248 (PQIAPCVIVA…TVARRLIEDT (124 aa)) constitute a Nudix hydrolase domain. Positions 158, 174, and 178 each coordinate a divalent metal cation. The short motif at 159–180 (GFVEVGETLEQAVSREVLEESN) is the Nudix box element. Substrate is bound at residue 192 to 199 (QPWPFPHS). Residue E219 participates in a divalent metal cation binding. Substrate is bound at residue A241.

The protein belongs to the Nudix hydrolase family. NudC subfamily. As to quaternary structure, homodimer. Mg(2+) serves as cofactor. It depends on Mn(2+) as a cofactor. The cofactor is Zn(2+).

The catalysed reaction is a 5'-end NAD(+)-phospho-ribonucleoside in mRNA + H2O = a 5'-end phospho-adenosine-phospho-ribonucleoside in mRNA + beta-nicotinamide D-ribonucleotide + 2 H(+). The enzyme catalyses NAD(+) + H2O = beta-nicotinamide D-ribonucleotide + AMP + 2 H(+). It carries out the reaction NADH + H2O = reduced beta-nicotinamide D-ribonucleotide + AMP + 2 H(+). In terms of biological role, mRNA decapping enzyme that specifically removes the nicotinamide adenine dinucleotide (NAD) cap from a subset of mRNAs by hydrolyzing the diphosphate linkage to produce nicotinamide mononucleotide (NMN) and 5' monophosphate mRNA. The NAD-cap is present at the 5'-end of some mRNAs and stabilizes RNA against 5'-processing. Has preference for mRNAs with a 5'-end purine. Catalyzes the hydrolysis of a broad range of dinucleotide pyrophosphates. The polypeptide is NAD-capped RNA hydrolase NudC (Yersinia enterocolitica serotype O:8 / biotype 1B (strain NCTC 13174 / 8081)).